We begin with the raw amino-acid sequence, 963 residues long: Putative RNA Helicase B962L (963 aa).

The region spanning 43-229 (IPTSLADRVL…FGIGKENIIL (187 aa)) is the Helicase ATP-binding domain. 56 to 63 (SRTGSGKS) lines the ATP pocket. A DEAH box motif is present at residues 167-170 (DEAH). One can recognise a Helicase C-terminal domain in the interval 253-459 (ACETALTIHK…TIKKNKEGVF (207 aa)). Residues 521–541 (GYFWQAAISDIATILAVVSVV) form a helical membrane-spanning segment.

Belongs to the DEAD box helicase family. DEAH subfamily.

It is found in the host membrane. The protein localises to the virion. It catalyses the reaction ATP + H2O = ADP + phosphate + H(+). This chain is Putative RNA Helicase B962L, found in Ornithodoros (relapsing fever ticks).